Reading from the N-terminus, the 1086-residue chain is MKLLYTDIENSLTEILVQEAEVFANSGARVFYIAPNSLSFEKERTVLEHLTKESSFSITVTRFAQMARYFTLNKQKAQKSLDDLSLTMLFHLVLHDLSQNELTIYHALKSDQTFIKQLVDLFKEMQSANLTIADIEMENLARKEDLITIFSALSRELLRYDFQQMSSLAVFQEAIRSGLLDQELAKTVVIIDGFTRFSAEEESLIHQLHQKCQEIVIGTYISSKAMKQNFTKGNLYEASIDFLRQLSVTYQVKSLYLSGEKTFKNSFTTMSRLLESQYDYSLTELTISEDIKNDVQIWQQLNQKEEIENIARDIRQKLNEGYRYKDILVLLGDVEAYQLQVGPIFDKYDIPYYLGKAESMSHHPLVQFMDSLENCRRYNWRKEDIINLLKSRMLGDFTIRECDQFESYLNYADINGFTAFSKDFTANTFNQKNEKGYDLDKINLIRKYLFSHLNQFFKSRAQKGSNILNHFLQFLSDIDFVSSFQRLSQKQSALQQEKDEEVWKSFTSILESFYNIFKDETLTQELTLMLIKSAMQAADYRVVPATLDVVSVKSYDLVEPHSKSLVYALGLTRTHFPKTVQQTGLISDQERAKTNEKWDSHHRFDISSIENSKKNHYTALSLFNAATDKLVLSYPMVLNEVVEEASPYLKLLHSFGIPIVEKQKNTFSDLENGIGNYKSLLSQWIALNQEPLTEELYQEEKSFWLVMSRYLKKQLAAKKLTFPEQKSHLATSRLSPEVLAIKYPDHQPLSLSSSALTVYHDNQYKYFLQYVLGLQELESIHPDARHHGTYLHRVFEYVVDDQRSIPFDDKIEEAIQRTNQERLFQTYYQSDAESRFSLSLLEDIAKSTASIFPITPTKVLSQEERFQLHFDEKVRVNGIIDRIDQLDDGSIGIVDYKSSQTVFDIGKFYNGLNSQLPTYLEALNTREKSKDMPPQLFGAMYLHMQDPKMDLNEFKLFDDKVVEKLYSRLTYKGIFLEREKEHLASGAYQMKSNLYSEEELRNLLDYNQFLYLKAEKEIRAGHFLINPYTEDGKTVKGDQLKAITRFEADLDLGQARMLLKLPTKEKREGFLKLMKEDMKGGKKDEI.

Belongs to the helicase family. AddB/RexB type 2 subfamily. Heterodimer of AddA and RexB. The cofactor is Mg(2+).

Its function is as follows. The heterodimer acts as both an ATP-dependent DNA helicase and an ATP-dependent, dual-direction single-stranded exonuclease. Recognizes the chi site generating a DNA molecule suitable for the initiation of homologous recombination. This subunit has 5' -&gt; 3' nuclease activity but not helicase activity. This Streptococcus uberis (strain ATCC BAA-854 / 0140J) protein is ATP-dependent helicase/deoxyribonuclease subunit B.